A 115-amino-acid chain; its full sequence is Holo-[acyl-carrier-protein] synthase (115 aa).

Asp6 and Glu51 together coordinate Mg(2+).

It belongs to the P-Pant transferase superfamily. AcpS family. Requires Mg(2+) as cofactor.

It localises to the cytoplasm. It carries out the reaction apo-[ACP] + CoA = holo-[ACP] + adenosine 3',5'-bisphosphate + H(+). Its function is as follows. Transfers the 4'-phosphopantetheine moiety from coenzyme A to a Ser of acyl-carrier-protein. The sequence is that of Holo-[acyl-carrier-protein] synthase from Campylobacter jejuni subsp. jejuni serotype O:6 (strain 81116 / NCTC 11828).